We begin with the raw amino-acid sequence, 378 residues long: Chaperone protein DnaJ (378 aa).

The 65-residue stretch at Glu-5 to Gly-69 folds into the J domain. The segment at Gly-134–Ala-216 adopts a CR-type zinc-finger fold. 8 residues coordinate Zn(2+): Cys-147, Cys-150, Cys-164, Cys-167, Cys-190, Cys-193, Cys-204, and Cys-207. CXXCXGXG motif repeat units lie at residues Cys-147–Gly-154, Cys-164–Gly-171, Cys-190–Gly-197, and Cys-204–Gly-211.

This sequence belongs to the DnaJ family. As to quaternary structure, homodimer. It depends on Zn(2+) as a cofactor.

The protein localises to the cytoplasm. Participates actively in the response to hyperosmotic and heat shock by preventing the aggregation of stress-denatured proteins and by disaggregating proteins, also in an autonomous, DnaK-independent fashion. Unfolded proteins bind initially to DnaJ; upon interaction with the DnaJ-bound protein, DnaK hydrolyzes its bound ATP, resulting in the formation of a stable complex. GrpE releases ADP from DnaK; ATP binding to DnaK triggers the release of the substrate protein, thus completing the reaction cycle. Several rounds of ATP-dependent interactions between DnaJ, DnaK and GrpE are required for fully efficient folding. Also involved, together with DnaK and GrpE, in the DNA replication of plasmids through activation of initiation proteins. This Streptococcus pyogenes serotype M6 (strain ATCC BAA-946 / MGAS10394) protein is Chaperone protein DnaJ.